Reading from the N-terminus, the 362-residue chain is MNIKSLLLGSAAALVAASGAQAADAIVAPEPEAVEYVRVCDAYGAGYFYIPGTEICLRVHGYVRYDVKGGDDVYSGTDRNGWDKGARFALRVSTGSETELGTLKTFTELRFNYAANNSGVDGKYGNETSSGTVMEFAYIQLGGLRVGIDESEFHTFTGYLGDVINDDVISAGSYRTGKISYTFTGGNGFSAVIALEQGGDNDGGYTGTTNYHIDGYMPDVVGGLKYAGGWGSIAGVVAYDSVIEEWAAKVRGDVNITDQFSVWLQGAYSSAATPDQNYGQWGGDWAVWGGLKYQATQKAAFNLQAAHDDWGKTAVTANVAYELVPGFTVTPEVSYTKFGGEWKNTVAEDNAWGGIVRFQRSF.

An N-terminal signal peptide occupies residues 1 to 22; it reads MNIKSLLLGSAAALVAASGAQA.

Belongs to the alphaproteobacteria porin family. As to quaternary structure, homotrimer.

The protein resides in the cell outer membrane. Functionally, forms passive diffusion pores that allow small molecular weight hydrophilic materials across the outer membrane. The sequence is that of Porin Omp2b (omp2b) from Brucella melitensis biotype 1 (strain ATCC 23456 / CCUG 17765 / NCTC 10094 / 16M).